We begin with the raw amino-acid sequence, 346 residues long: Cyclin-dependent kinase 2 (346 aa).

Residue Met-1 is modified to N-acetylmethionine. The Protein kinase domain maps to 4-334 (FQKVEKIGEG…AKAALAHPFF (331 aa)). Lys-6 carries the N6-acetyllysine modification. 10–18 (IGEGTYGVV) provides a ligand contact to ATP. Residue Thr-14 is modified to Phosphothreonine. The residue at position 15 (Tyr-15) is a Phosphotyrosine; by WEE1. Position 19 is a phosphotyrosine (Tyr-19). ATP-binding positions include Lys-33, 81 to 83 (EFL), and Asp-86. Residue Asp-127 is the Proton acceptor of the active site. Residues 129 to 132 (KPQN) and Asp-145 contribute to the ATP site. Positions 132 and 145 each coordinate Mg(2+). Position 160 is a phosphothreonine; by CAK and CCRK (Thr-160). Ser-218 bears the Phosphoserine mark.

The protein belongs to the protein kinase superfamily. CMGC Ser/Thr protein kinase family. CDC2/CDKX subfamily. As to quaternary structure, found in a complex with CABLES1, CCNA1 and CCNE1. Interacts with CABLES1. Interacts with UHRF2. Part of a complex consisting of UHRF2, CDK2 and CCNE1. Interacts with the Speedy/Ringo proteins SPDYA and SPDYC. Interaction with SPDYA promotes kinase activation via a conformation change that alleviates obstruction of the substrate-binding cleft by the T-loop. Found in a complex with both SPDYA and CDKN1B/KIP1. Binds to RB1 and CDK7. Binding to CDKN1A (p21) leads to CDK2/cyclin E inactivation at the G1-S phase DNA damage checkpoint, thereby arresting cells at the G1-S transition during DNA repair. Associated with PTPN6 and beta-catenin/CTNNB1. Interacts with CACUL1. May interact with CEP63. Interacts with ANKRD17. Interacts with CEBPA (when phosphorylated). Forms a ternary complex with CCNA2 and CDKN1B; CDKN1B inhibits the kinase activity of CDK2 through conformational rearrangements. Interacts with cyclins A, B1, B3, D, or E. Interacts with CDK2AP2. Requires Mg(2+) as cofactor. In terms of processing, phosphorylated at Thr-160 by CDK7 in a CAK complex. Phosphorylation at Thr-160 promotes kinase activity, whereas phosphorylation at Tyr-15 by WEE1 reduces slightly kinase activity. Phosphorylated on Thr-14 and Tyr-15 during S and G2 phases before being dephosphorylated by CDC25A. Nitrosylated after treatment with nitric oxide (DETA-NO).

The protein resides in the cytoplasm. It localises to the cytoskeleton. It is found in the microtubule organizing center. Its subcellular location is the centrosome. The protein localises to the nucleus. The protein resides in the cajal body. It localises to the endosome. It catalyses the reaction L-seryl-[protein] + ATP = O-phospho-L-seryl-[protein] + ADP + H(+). The catalysed reaction is L-threonyl-[protein] + ATP = O-phospho-L-threonyl-[protein] + ADP + H(+). Phosphorylation at Thr-14 or Tyr-15 inactivates the enzyme, while phosphorylation at Thr-160 activates it. Stimulated by MYC. Inactivated by CDKN1A (p21). Serine/threonine-protein kinase involved in the control of the cell cycle; essential for meiosis, but dispensable for mitosis. Phosphorylates CABLES1, CTNNB1, CDK2AP2, ERCC6, NBN, USP37, p53/TP53, NPM1, CDK7, RB1, BRCA2, MYC, NPAT, EZH2. Triggers duplication of centrosomes and DNA. Acts at the G1-S transition to promote the E2F transcriptional program and the initiation of DNA synthesis, and modulates G2 progression; controls the timing of entry into mitosis/meiosis by controlling the subsequent activation of cyclin B/CDK1 by phosphorylation, and coordinates the activation of cyclin B/CDK1 at the centrosome and in the nucleus. Crucial role in orchestrating a fine balance between cellular proliferation, cell death, and DNA repair in embryonic stem cells (ESCs). Activity of CDK2 is maximal during S phase and G2; activated by interaction with cyclin E during the early stages of DNA synthesis to permit G1-S transition, and subsequently activated by cyclin A2 (cyclin A1 in germ cells) during the late stages of DNA replication to drive the transition from S phase to mitosis, the G2 phase. EZH2 phosphorylation promotes H3K27me3 maintenance and epigenetic gene silencing. Cyclin E/CDK2 prevents oxidative stress-mediated Ras-induced senescence by phosphorylating MYC. Involved in G1-S phase DNA damage checkpoint that prevents cells with damaged DNA from initiating mitosis; regulates homologous recombination-dependent repair by phosphorylating BRCA2, this phosphorylation is low in S phase when recombination is active, but increases as cells progress towards mitosis. In response to DNA damage, double-strand break repair by homologous recombination a reduction of CDK2-mediated BRCA2 phosphorylation. Involved in regulation of telomere repair by mediating phosphorylation of NBN. Phosphorylation of RB1 disturbs its interaction with E2F1. NPM1 phosphorylation by cyclin E/CDK2 promotes its dissociation from unduplicated centrosomes, thus initiating centrosome duplication. Cyclin E/CDK2-mediated phosphorylation of NPAT at G1-S transition and until prophase stimulates the NPAT-mediated activation of histone gene transcription during S phase. Required for vitamin D-mediated growth inhibition by being itself inactivated. Involved in the nitric oxide- (NO) mediated signaling in a nitrosylation/activation-dependent manner. USP37 is activated by phosphorylation and thus triggers G1-S transition. CTNNB1 phosphorylation regulates insulin internalization. Phosphorylates FOXP3 and negatively regulates its transcriptional activity and protein stability. Phosphorylates ERCC6 which is essential for its chromatin remodeling activity at DNA double-strand breaks. Acts as a regulator of the phosphatidylinositol 3-kinase/protein kinase B signal transduction by mediating phosphorylation of the C-terminus of protein kinase B (PKB/AKT1 and PKB/AKT2), promoting its activation. In Mus musculus (Mouse), this protein is Cyclin-dependent kinase 2 (Cdk2).